A 311-amino-acid polypeptide reads, in one-letter code: Aspartate carbamoyltransferase catalytic subunit (311 aa).

Carbamoyl phosphate is bound by residues R55 and T56. K85 provides a ligand contact to L-aspartate. Residues R106, H135, and Q138 each coordinate carbamoyl phosphate. Positions 168 and 230 each coordinate L-aspartate. L268 and P269 together coordinate carbamoyl phosphate.

Belongs to the aspartate/ornithine carbamoyltransferase superfamily. ATCase family. As to quaternary structure, heterododecamer (2C3:3R2) of six catalytic PyrB chains organized as two trimers (C3), and six regulatory PyrI chains organized as three dimers (R2).

The catalysed reaction is carbamoyl phosphate + L-aspartate = N-carbamoyl-L-aspartate + phosphate + H(+). Its pathway is pyrimidine metabolism; UMP biosynthesis via de novo pathway; (S)-dihydroorotate from bicarbonate: step 2/3. Its function is as follows. Catalyzes the condensation of carbamoyl phosphate and aspartate to form carbamoyl aspartate and inorganic phosphate, the committed step in the de novo pyrimidine nucleotide biosynthesis pathway. The sequence is that of Aspartate carbamoyltransferase catalytic subunit from Salmonella paratyphi C (strain RKS4594).